The chain runs to 157 residues: Fimbrial protein Q (157 aa).

A propeptide spanning residues 1 to 6 is cleaved from the precursor; that stretch reads MNAQKG. Position 7 is an N-methylphenylalanine (F7). Residues C136 and C155 are joined by a disulfide bond.

It belongs to the N-Me-Phe pilin family. In terms of assembly, the pili are polar flexible filaments of about 5.4 nanometers diameter and 2.5 micrometers average length; they consist of only a single polypeptide chain arranged in a helical configuration of five subunits per turn in the assembled pilus.

It is found in the fimbrium. The polypeptide is Fimbrial protein Q (tfpQ) (Moraxella bovis).